The primary structure comprises 450 residues: 3-phosphoshikimate 1-carboxyvinyltransferase (450 aa).

The tract at residues 1 to 26 is disordered; it reads MSAHGDPIPMTAHPSGPLSGTAQVPG. Residues Lys28, Ser29, and Arg33 each contribute to the 3-phosphoshikimate site. Residue Lys28 coordinates phosphoenolpyruvate. Phosphoenolpyruvate-binding residues include Gly101 and Arg129. 3-phosphoshikimate-binding residues include Ser174, Gln176, Asp327, and Lys354. Residue Gln176 coordinates phosphoenolpyruvate. Asp327 functions as the Proton acceptor in the catalytic mechanism. Phosphoenolpyruvate is bound by residues Arg358 and Arg403.

The protein belongs to the EPSP synthase family. As to quaternary structure, monomer.

The protein resides in the cytoplasm. The enzyme catalyses 3-phosphoshikimate + phosphoenolpyruvate = 5-O-(1-carboxyvinyl)-3-phosphoshikimate + phosphate. It participates in metabolic intermediate biosynthesis; chorismate biosynthesis; chorismate from D-erythrose 4-phosphate and phosphoenolpyruvate: step 6/7. Functionally, catalyzes the transfer of the enolpyruvyl moiety of phosphoenolpyruvate (PEP) to the 5-hydroxyl of shikimate-3-phosphate (S3P) to produce enolpyruvyl shikimate-3-phosphate and inorganic phosphate. The polypeptide is 3-phosphoshikimate 1-carboxyvinyltransferase (Dinoroseobacter shibae (strain DSM 16493 / NCIMB 14021 / DFL 12)).